We begin with the raw amino-acid sequence, 88 residues long: Protein Aeq5-like1 (88 aa).

Positions 1-20 (MKSVIAVLVLSLVLVNFTQA) are cleaved as a signal peptide. 4 disulfides stabilise this stretch: cysteine 29-cysteine 68, cysteine 33-cysteine 64, cysteine 40-cysteine 56, and cysteine 47-cysteine 53.

In terms of tissue distribution, is expressed in the ectodermal cells of gastrulae and planulae. Is also noticeable in the endoderm in late planulae. In the primary polyps, is expressed in both ectoderm (sensory neurons) and endoderm (ganglions). Is not expressed in nematocytes.

Probable neuropeptide. The chain is Protein Aeq5-like1 from Nematostella vectensis (Starlet sea anemone).